Here is a 322-residue protein sequence, read N- to C-terminus: Ras-like protein 2 (322 aa).

GTP is bound by residues 20 to 25, 36 to 42, 66 to 67, and 123 to 126; these read GVGKSA, VDEYDPT, AG, and NKSD. Positions 39–47 match the Effector region motif; that stretch reads YDPTIEDSY. Lys-131 is covalently cross-linked (Glycyl lysine isopeptide (Lys-Gly) (interchain with G-Cter in ubiquitin)). Residue 153–155 participates in GTP binding; it reads SAK. The interval 178–322 is disordered; the sequence is YNKTLTENDN…SGSGGCCIIS (145 aa). The span at 180 to 205 shows a compositional bias: polar residues; the sequence is KTLTENDNSKQTSQDTKGSGANSVPR. Ser-198, Ser-202, Ser-207, Ser-214, Ser-235, and Ser-238 each carry phosphoserine. Positions 215–252 are enriched in polar residues; that stretch reads NAANGKNVNSSTTVVNARNASIESKTGLAGNQATNGKT. Over residues 261-284 the composition is skewed to low complexity; that stretch reads NSTGQAGQANAQSANTVNNRVNNN. Residues 285–294 show a composition bias toward polar residues; that stretch reads SKAGQVSNAK. A lipid anchor (S-palmitoyl cysteine) is attached at Cys-318. At Cys-319 the chain carries Cysteine methyl ester. The S-farnesyl cysteine moiety is linked to residue Cys-319. Positions 320-322 are cleaved as a propeptide — removed in mature form; the sequence is IIS.

It belongs to the small GTPase superfamily. Ras family. Farnesylated by RAM1-RAM2, which is required for targeting RAS2 to the cytoplasmic site of the endoplasmic reticulum, where proteolytic processing of the C-terminus by RCE1 and methylation of the resulting carboxyl group by STE14 occurs. Post-translationally, palmitoylated by the ERF2-SHR5 complex, which is required for proper plasma membrane localization of RAS2.

It localises to the cell membrane. It carries out the reaction GTP + H2O = GDP + phosphate + H(+). With respect to regulation, alternates between an inactive form bound to GDP and an active form bound to GTP. Activated by guanine nucleotide-exchange factor (GEF) CDC25 and inactivated by GTPase-activating proteins (GAPs) IRA1 and IRA2. Its function is as follows. The S.cerevisiae Ras proteins modulate the activity of the adenylate cyclase catalytic subunit and therefore affect the biosynthesis of cyclic-AMP. The polypeptide is Ras-like protein 2 (RAS2) (Saccharomyces cerevisiae (strain ATCC 204508 / S288c) (Baker's yeast)).